A 529-amino-acid polypeptide reads, in one-letter code: UPF0159 protein TC_0921 (529 aa).

2 consecutive ThyX domains span residues 38 to 274 and 309 to 511; these read KGAL…AEPH and KGVK…LKFV.

The protein belongs to the UPF0159 family.

The sequence is that of UPF0159 protein TC_0921 from Chlamydia muridarum (strain MoPn / Nigg).